Reading from the N-terminus, the 393-residue chain is 5-azacytidine-induced protein 2 (393 aa).

The segment at methionine 1–aspartate 198 is homodimerization. Positions alanine 40–aspartate 198 form a coiled coil. Positions serine 217–cysteine 258 are interaction with TBK1 and IKBKE. The residue at position 319 (serine 319) is a Phosphoserine. Disordered regions lie at residues threonine 321–tyrosine 340 and leucine 345–histidine 393. Serine 354 carries the post-translational modification Phosphoserine. The span at glutamine 384–histidine 393 shows a compositional bias: polar residues.

Homodimer. Interacts with IKBKE, TBK1 and TICAM1. Interacts with TAX1BP1. Interacts with CALCOCO2. In terms of processing, ubiquitinated via 'Lys-48'-linked polyubiquitination by TRIM38, leading to its degradation.

Its subcellular location is the cytoplasm. In terms of biological role, adapter protein which binds TBK1 and IKBKE playing a role in antiviral innate immunity. Activates serine/threonine-protein kinase TBK1 and facilitates its oligomerization. Enhances the phosphorylation of NF-kappa-B p65 subunit RELA by TBK1. Promotes TBK1-induced as well as TNF-alpha or PMA-induced activation of NF-kappa-B. Participates in IFNB promoter activation via TICAM1. This is 5-azacytidine-induced protein 2 (AZI2) from Bos taurus (Bovine).